Consider the following 378-residue polypeptide: Septin-5 (378 aa).

Positions 50–323 (KGFDFTLMVA…ENYRAHCIQQ (274 aa)) constitute a Septin-type G domain. The G1 motif stretch occupies residues 60–67 (GESGLGKS). Residues 60–67 (GESGLGKS), threonine 94, and glycine 120 contribute to the GTP site. Residues 117–120 (DTPG) form a G3 motif region. At arginine 177 the chain carries Omega-N-methylarginine. A G4 motif region spans residues 198 to 201 (AKAD). 199-207 (KADCLVPSE) provides a ligand contact to GTP. Position 234 is a phosphoserine (serine 234). GTP-binding residues include glycine 257 and arginine 272. Position 336 is a phosphoserine (serine 336). Threonine 345 is subject to Phosphothreonine. Residues 347–378 (DAETEKLIRMKDEELRRMQEMLQRMKQQMQDQ) adopt a coiled-coil conformation.

This sequence belongs to the TRAFAC class TrmE-Era-EngA-EngB-Septin-like GTPase superfamily. Septin GTPase family. In terms of assembly, septins polymerize into heterooligomeric protein complexes that form filaments, and can associate with cellular membranes, actin filaments and microtubules. GTPase activity is required for filament formation. Interacts with SEPTIN2 and SEPTIN5. In platelets, associated with a complex containing STX4. Interacts with PRKN; this interaction leads to SEPTIN5 ubiquitination and degradation. Interacts with DYRK1A. Interacts with STX1A; in the cerebellar cortex. Post-translationally, phosphorylated by DYRK1A.

The protein resides in the cytoplasm. It localises to the cytoskeleton. Its function is as follows. Filament-forming cytoskeletal GTPase. May play a role in cytokinesis (Potential). May play a role in platelet secretion. The protein is Septin-5 of Macaca fascicularis (Crab-eating macaque).